The sequence spans 173 residues: Alpha-crystallin A chain (173 aa).

The residue at position 1 (Met-1) is an N-acetylmethionine. The interval 1 to 63 (MDVTIQHPWF…RTVLDSGISE (63 aa)) is required for complex formation with BFSP1 and BFSP2. Gln-6 carries the post-translational modification Deamidated glutamine; partial. Phosphoserine is present on Ser-45. A Deamidated glutamine; partial modification is found at Gln-50. Residues 52 to 162 (LFRTVLDSGI…GPSERAIPVS (111 aa)) form the sHSP domain. N6-acetyllysine occurs at positions 70 and 99. The Zn(2+) site is built by His-100, Glu-102, and His-107. Positions 145–173 (KVASGLDAGPSERAIPVSREEKPSSAPSS) are disordered. The O-linked (GlcNAc) serine glycan is linked to Ser-162.

Belongs to the small heat shock protein (HSP20) family. As to quaternary structure, heteromer composed of three CRYAA and one CRYAB subunits. Zinc coordination is achieved at least by His-100, Glu-102 and His-107. His-100 and Glu-102 come from the same molecule within the oligomer, while His-107 residue is provided by another molecule. Inter-subunit bridging via zinc ions enhances stability, which is crucial as there is no protein turn over in the lens. Can also form homodimers and homotetramers (dimers of dimers) which serve as the building blocks of homooligomers. Part of a complex required for lens intermediate filament formation composed of BFSP1, BFSP2 and CRYAA. Post-translationally, acetylation at Lys-70 may increase chaperone activity. Undergoes age-dependent proteolytical cleavage at the C-terminus.

The protein localises to the cytoplasm. The protein resides in the nucleus. In terms of biological role, contributes to the transparency and refractive index of the lens. Acts as a chaperone, preventing aggregation of various proteins under a wide range of stress conditions. Required for the correct formation of lens intermediate filaments as part of a complex composed of BFSP1, BFSP2 and CRYAA. The chain is Alpha-crystallin A chain (CRYAA) from Erinaceus europaeus (Western European hedgehog).